We begin with the raw amino-acid sequence, 473 residues long: Putative F-box/LRR-repeat protein At3g59170 (473 aa).

The F-box domain occupies 6-54; the sequence is KDMINVLPDALLCHILSFLTTKEAASTSLLSRRWRYLLAFVPNLEFDDS. LRR repeat units lie at residues 168 to 194, 196 to 221, 229 to 254, 333 to 364, and 365 to 390; these read TIKI…YLQS, MFDE…VLDG, SFTV…GYMH, VLYL…TIKS, and DPNV…VFQG.

This Arabidopsis thaliana (Mouse-ear cress) protein is Putative F-box/LRR-repeat protein At3g59170.